The primary structure comprises 207 residues: Ribosomal RNA small subunit methyltransferase G (207 aa).

S-adenosyl-L-methionine contacts are provided by residues glycine 75, phenylalanine 80, leucine 126 to glutamate 127, and arginine 140.

Belongs to the methyltransferase superfamily. RNA methyltransferase RsmG family.

It localises to the cytoplasm. It carries out the reaction guanosine(527) in 16S rRNA + S-adenosyl-L-methionine = N(7)-methylguanosine(527) in 16S rRNA + S-adenosyl-L-homocysteine. Specifically methylates the N7 position of guanine in position 527 of 16S rRNA. The protein is Ribosomal RNA small subunit methyltransferase G of Erythrobacter litoralis (strain HTCC2594).